Consider the following 1997-residue polypeptide: Nucleoprotein TPR (1997 aa).

Coiled-coil stretches lie at residues 1-36 (QEQH…NDLL), 101-277 (EIVK…HQMT), 335-1103 (DSTE…IKTI), and 1129-1305 (AEAS…EPQE). Composition is skewed to basic and acidic residues over residues 672 to 702 (SSEY…KTVE) and 1290 to 1305 (REQQ…EPQE). Disordered stretches follow at residues 672-706 (SSEY…QMEQ), 1290-1352 (REQQ…AAVP), 1438-1529 (AFVQ…KTET), 1561-1752 (IQTS…RRQS), 1795-1832 (AIHS…ASQG), and 1870-1997 (ENPA…RSNI). Polar residues-rich tracts occupy residues 1306–1321 (TTRI…QPTT), 1328–1347 (SANT…SKVT), and 1446–1487 (SHAT…SSSI). Over residues 1511 to 1529 (DQQRTKKRKEEDIEEKTET) the composition is skewed to basic and acidic residues. Over residues 1561–1587 (IQTSQVIESQAPEQLQNVQSTQDSLQD) the composition is skewed to polar residues. Acidic residues-rich tracts occupy residues 1601-1637 (SDEE…DSNE) and 1644-1667 (GNED…ETED). Polar residues-rich tracts occupy residues 1692-1709 (AEST…SASD), 1817-1830 (QASS…QLAS), and 1879-1899 (HASQ…TSVD). A compositionally biased stretch (acidic residues) spans 1902-1915 (AADEGDEVFVEAES). Over residues 1950–1959 (SSSIADTSSS) the composition is skewed to low complexity.

The protein belongs to the TPR family. Homodimer. Part of the nuclear pore complex (NPC). Interacts with nuclear receptor KPNB1; the interaction occurs in a RanGTP-dependent manner. Associates with the Importin alpha/Importin beta receptor. Expressed in epithelial cells, oocytes and egg (at protein level).

It localises to the nucleus. The protein localises to the nucleus membrane. The protein resides in the nucleus envelope. It is found in the nuclear pore complex. Its subcellular location is the cytoplasm. It localises to the cytoskeleton. The protein localises to the spindle. The protein resides in the chromosome. It is found in the centromere. Its subcellular location is the kinetochore. In terms of biological role, component of the nuclear pore complex (NPC), a complex required for the trafficking across the nuclear envelope. Functions as a scaffolding element in the nuclear phase of the NPC essential for normal nucleocytoplasmic transport of proteins and mRNAs, plays a role in the establishment of nuclear-peripheral chromatin compartmentalization in interphase, and in the mitotic spindle checkpoint signaling during mitosis. Involved in the quality control and retention of unspliced mRNAs in the nucleus. Implicated in nuclear export of mRNAs transcribed from heat shock gene promoters. May play a limited role in the regulation of nuclear protein export. May be involved in the formation and/or maintenance of NPC-associated perinuclear heterochromatin exclusion zones (HEZs). Finally, may act as a spatial regulator of the spindle-assembly checkpoint (SAC) response. This Xenopus laevis (African clawed frog) protein is Nucleoprotein TPR.